Reading from the N-terminus, the 524-residue chain is Solute carrier family 35 member F5 (524 aa).

Residues 1-22 (MVPPRHHPGAGRPGALSSSPPF) form a disordered region. Residues 13 to 22 (PGALSSSPPF) are compositionally biased toward low complexity. 2 helical membrane-spanning segments follow: residues 69-89 (MALG…SSEL) and 101-121 (FFST…FIVW). Phosphoserine is present on S207. Helical transmembrane passes span 244–264 (ISFF…EALS), 269–289 (AIVN…AAMF), 297–317 (FTLS…LVNL), 328–348 (TIGS…IVMI), 362–382 (MFFG…FFLL), 396–416 (VVLM…EFLW), 421–441 (FLTS…LSII), and 453–473 (WLFF…TLLC). The region spanning 253–317 (FLANFSYQEA…SIGGVVLVNL (65 aa)) is the EamA domain.

It belongs to the SLC35F solute transporter family.

The protein localises to the membrane. Functionally, putative solute transporter. This Bos taurus (Bovine) protein is Solute carrier family 35 member F5 (SLC35F5).